We begin with the raw amino-acid sequence, 80 residues long: Putative membrane protein insertion efficiency factor (80 aa).

The disordered stretch occupies residues 61–80 (KTGKDPVPDRFSLKRNQEGE). Over residues 62–80 (TGKDPVPDRFSLKRNQEGE) the composition is skewed to basic and acidic residues.

The protein belongs to the UPF0161 family.

It is found in the cell membrane. In terms of biological role, could be involved in insertion of integral membrane proteins into the membrane. This Streptococcus pneumoniae (strain P1031) protein is Putative membrane protein insertion efficiency factor.